A 178-amino-acid polypeptide reads, in one-letter code: ATP-dependent protease subunit HslV (178 aa).

Thr7 is a catalytic residue. Positions 162, 165, and 168 each coordinate Na(+).

It belongs to the peptidase T1B family. HslV subfamily. In terms of assembly, a double ring-shaped homohexamer of HslV is capped on each side by a ring-shaped HslU homohexamer. The assembly of the HslU/HslV complex is dependent on binding of ATP.

Its subcellular location is the cytoplasm. The catalysed reaction is ATP-dependent cleavage of peptide bonds with broad specificity.. Allosterically activated by HslU binding. Protease subunit of a proteasome-like degradation complex believed to be a general protein degrading machinery. The protein is ATP-dependent protease subunit HslV of Azoarcus sp. (strain BH72).